Here is a 916-residue protein sequence, read N- to C-terminus: MLVRTALRLIFGSQHERDLKNLLPLLNAVNAQESWVLPLQESEFKQKTAEFKARAAAGEALDAFLPQAFALAREAARRVLGERPYDVQILGSLVLHHGKIVEMKTGEGKTLMSVAAAYLNSLSGRGVHIVTVNDYLAERDARWMRPVYDYLGVSVGVILSSMGSQERRCAYACDITYGTNNELGFDYLRDNMQFLTEEKTQRDFYFAIIDEIDSILIDEARTPLIISGPAENDTQHYAEVDRLVGQLQEVERNPATGDYPNEVDGEEVRGDYIVDEKNRKVSFSGPGMLHIQDVLTHAGLIQGSLFDEENFKYIHYFTQALRAHLLYRADVDYVVKDGQVQIVDEFTGRILEGRRYSDGLHQAIEAKEHIRIAQRNRTMATITFQNFFRMYKKLSGMTGTADTEALELNKIYKLEVVVLPTNLPVARVDEHDVVYLSEEEKWSAICDEIKEAHTRGQPVLVGTISIEKSEKLSALLRTRGVKHEVLNAKNHAREALIIAEAGAKGSVTIATNMAGRGTDIKLGGNPEFRARQSATAIASKHGSSSVTVQEHMQACYEAEYTRWRADYEEVKQLGGLYVIGTERHESRRIDNQLRGRSGRQGDPGRSKFFLSLDDDLMRIFGGERLKRFMSRVGMEPGEPITHSWLNKSIERAQTKVEARNFDVRKHLLEYDDVLNEQRSFIYAQRAQILIDEHVVERVYTTIEEYLNREITALRQELKRRGRLSLGAFQQNLSTLFDYALGGEDASGWNETRLGTLKQEILAHLKKNIESKYLLAGAQNMDTFIRYQYVQAIDKKWLDHLELLEILRESVYLRSYGQKNPLTEYKLEGFDLFYTMLDDIRLSIASQVVRVTVHMEEQRVPRPPHVAQAAHEFQALGQPGRGHGSLSALPIQAGAKVGRNTPCPCGSGKKYKHCCGR.

ATP is bound by residues Q88, 106–110, and D519; that span reads GEGKT. Residues C902, C904, C913, and C914 each coordinate Zn(2+).

This sequence belongs to the SecA family. Monomer and homodimer. Part of the essential Sec protein translocation apparatus which comprises SecA, SecYEG and auxiliary proteins SecDF. Other proteins may also be involved. Requires Zn(2+) as cofactor.

The protein resides in the cell inner membrane. Its subcellular location is the cytoplasm. The catalysed reaction is ATP + H2O + cellular proteinSide 1 = ADP + phosphate + cellular proteinSide 2.. Its function is as follows. Part of the Sec protein translocase complex. Interacts with the SecYEG preprotein conducting channel. Has a central role in coupling the hydrolysis of ATP to the transfer of proteins into and across the cell membrane, serving as an ATP-driven molecular motor driving the stepwise translocation of polypeptide chains across the membrane. The protein is Protein translocase subunit SecA of Treponema pallidum (strain Nichols).